Here is a 370-residue protein sequence, read N- to C-terminus: Ubiquinone biosynthesis O-methyltransferase, mitochondrial (370 aa).

The N-terminal 86 residues, 1-86, are a transit peptide targeting the mitochondrion; that stretch reads MWRGGRLGSR…TYRTPWKRLY (86 aa). Position 125 (arginine 125) interacts with S-adenosyl-L-methionine. Lysine 144 and lysine 150 each carry N6-acetyllysine. Residues glycine 155 and aspartate 176 each contribute to the S-adenosyl-L-methionine site. Lysine 197 bears the N6-acetyllysine mark. Serine 223 contributes to the S-adenosyl-L-methionine binding site. The Mg(2+) site is built by glutamate 224, glutamate 227, and histidine 228. The interval 336–370 is disordered; it reads AQEHQEPAESALKGETGALHANTSGSPSVREEQRT.

Belongs to the class I-like SAM-binding methyltransferase superfamily. UbiG/COQ3 family. Component of a multi-subunit COQ enzyme complex, composed of at least COQ3, COQ4, COQ5, COQ6, COQ7 and COQ9. Requires Mg(2+) as cofactor.

Its subcellular location is the mitochondrion inner membrane. It carries out the reaction 3,4-dihydroxy-5-(all-trans-decaprenyl)benzoate + S-adenosyl-L-methionine = 4-hydroxy-3-methoxy-5-(all-trans-decaprenyl)benzoate + S-adenosyl-L-homocysteine + H(+). It catalyses the reaction a 3-demethylubiquinone + S-adenosyl-L-methionine = a ubiquinone + S-adenosyl-L-homocysteine. The enzyme catalyses 3-demethylubiquinol-10 + S-adenosyl-L-methionine = ubiquinol-10 + S-adenosyl-L-homocysteine + H(+). The protein operates within cofactor biosynthesis; ubiquinone biosynthesis. In terms of biological role, O-methyltransferase required for two non-consecutive steps during ubiquinone biosynthesis. Catalyzes the 2 O-methylation of 3,4-dihydroxy-5-(all-trans-decaprenyl)benzoic acid into 4-hydroxy-3-methoxy-5-(all-trans-decaprenyl)benzoic acid. Also catalyzes the last step of ubiquinone biosynthesis by mediating methylation of 3-demethylubiquinone into ubiquinone. Also able to mediate the methylation of 3-demethylubiquinol-10 into ubiquinol-10. The protein is Ubiquinone biosynthesis O-methyltransferase, mitochondrial of Mus musculus (Mouse).